The primary structure comprises 98 residues: Defensin-like protein 219 (98 aa).

The first 16 residues, 1–16, serve as a signal peptide directing secretion; it reads MKTIFVFLTLAVLVSS. Intrachain disulfides connect Cys68–Cys85, Cys71–Cys90, and Cys75–Cys92.

Belongs to the DEFL family.

It localises to the secreted. The sequence is that of Defensin-like protein 219 from Arabidopsis thaliana (Mouse-ear cress).